The following is a 408-amino-acid chain: UDP-N-acetylglucosamine--dolichyl-phosphate N-acetylglucosaminephosphotransferase (408 aa).

Over 1 to 10 (MWAFPELPLP) the chain is Lumenal. A helical transmembrane segment spans residues 11–38 (LLVNLFGSLLGFVATVTLIPAFRSHFIA). Topologically, residues 39–58 (ARLCGQDLNKLSRQQIPESQ) are cytoplasmic. Residues 44 to 46 (QDL) and glutamate 56 contribute to the UDP-N-acetyl-alpha-D-glucosamine site. The chain crosses the membrane as a helical span at residues 59–78 (GVICGAVFLIILFCFIPFPF). Over 79-91 (LNCFVEEQCKAFP) the chain is Lumenal. Residues 92–118 (HHEFVALIGALLAICCMIFLGFADDVL) form a helical membrane-spanning segment. Residues 119-121 (NLR) lie on the Cytoplasmic side of the membrane. The chain crosses the membrane as a helical span at residues 122 to 143 (WRHKLLLPTAASLPLLMVYFTN). Dolichyl phosphate is bound at residue lysine 125. Topologically, residues 144–166 (FGNTTIVVPKPFRWILGLHLDLG) are lumenal. N-linked (GlcNAc...) asparagine glycosylation is present at asparagine 146. Residues 167–186 (ILYYVYMGLLAVFCTNAINI) form a helical membrane-spanning segment. 178-186 (VFCTNAINI) is a dolichyl phosphate binding site. Residue asparagine 185 participates in Mg(2+) binding. Residues 187–192 (LAGING) lie on the Cytoplasmic side of the membrane. A UDP-N-acetyl-alpha-D-glucosamine-binding site is contributed by asparagine 191. The helical transmembrane segment at 193-213 (LEAGQSLVISASIIVFNLVEL) threads the bilayer. The Lumenal portion of the chain corresponds to 214-218 (EGDYR). Residues 219 to 242 (DDHVFSLYFMIPFFFTTLGLLYHN) form a helical membrane-spanning segment. Residues 243-250 (WYPSQVFV) lie on the Cytoplasmic side of the membrane. Residues 251 to 269 (GDTFCYFAGMTFAVVGILG) traverse the membrane as a helical segment. Position 252 (aspartate 252) interacts with Mg(2+). Over 270-271 (HF) the chain is Lumenal. Residues 272–293 (SKTMLLFFIPQVFNFLYSLPQL) form a helical membrane-spanning segment. The Cytoplasmic portion of the chain corresponds to 294 to 375 (LHAIPCPRHR…LLLKIFGPIH (82 aa)). 301–303 (RHR) provides a ligand contact to UDP-N-acetyl-alpha-D-glucosamine. A helical transmembrane segment spans residues 376 to 400 (ERNLTLLLLLLQILSSAVTFSIRYQ). Residues 401-408 (LVRLFYDV) are Lumenal-facing.

The protein belongs to the glycosyltransferase 4 family. Homodimer. Mg(2+) is required as a cofactor.

The protein resides in the endoplasmic reticulum membrane. The enzyme catalyses a di-trans,poly-cis-dolichyl phosphate + UDP-N-acetyl-alpha-D-glucosamine = an N-acetyl-alpha-D-glucosaminyl-diphospho-di-trans,poly-cis-dolichol + UMP. It participates in protein modification; protein glycosylation. With respect to regulation, inhibited by natural nucleoside antibiotic tunicamycin, which acts as a structural analog and competitor of UDP-GlcNAc. Its function is as follows. UDP-N-acetylglucosamine--dolichyl-phosphate N-acetylglucosaminephosphotransferase that operates in the biosynthetic pathway of dolichol-linked oligosaccharides, the glycan precursors employed in protein asparagine (N)-glycosylation. The assembly of dolichol-linked oligosaccharides begins on the cytosolic side of the endoplasmic reticulum membrane and finishes in its lumen. The sequential addition of sugars to dolichol pyrophosphate produces dolichol-linked oligosaccharides containing fourteen sugars, including two GlcNAcs, nine mannoses and three glucoses. Once assembled, the oligosaccharide is transferred from the lipid to nascent proteins by oligosaccharyltransferases. Catalyzes the initial step of dolichol-linked oligosaccharide biosynthesis, transfering GlcNAc-1-P from cytosolic UDP-GlcNAc onto the carrier lipid dolichyl phosphate (P-dolichol), yielding GlcNAc-P-P-dolichol embedded in the cytoplasmic leaflet of the endoplasmic reticulum membrane. The polypeptide is UDP-N-acetylglucosamine--dolichyl-phosphate N-acetylglucosaminephosphotransferase (DPAGT1) (Cricetulus griseus (Chinese hamster)).